The primary structure comprises 36 residues: MSDIN-like toxin proprotein 10 (36 aa).

The propeptide occupies 1 to 10 (MSDINATRLP). Residues 11-19 (GAYPPVPMP) constitute a cross-link (cyclopeptide (Gly-Pro)). A propeptide spanning residues 20–36 (CVGDADNFTLTRGENLC) is cleaved from the precursor.

Belongs to the MSDIN fungal toxin family. Processed by the macrocyclase-peptidase enzyme POPB to yield a toxic cyclic nonapeptide. POPB first removes 10 residues from the N-terminus. Conformational trapping of the remaining peptide forces the enzyme to release this intermediate rather than proceed to macrocyclization. The enzyme rebinds the remaining peptide in a different conformation and catalyzes macrocyclization of the N-terminal 9 residues.

Probable toxin that belongs to the MSDIN-like toxin family responsible for a large number of food poisoning cases and deaths. The protein is MSDIN-like toxin proprotein 10 of Amanita bisporigera (Destroying angel).